We begin with the raw amino-acid sequence, 310 residues long: Isoflavone reductase homolog A622 (310 aa).

Residues G13–G19, R38, and K47 each bind NADP(+). The active-site Proton acceptor is the K135. An NADP(+)-binding site is contributed by R139.

Belongs to the NmrA-type oxidoreductase family. Isoflavone reductase subfamily. Monomer.

Its subcellular location is the cytoplasm. It participates in alkaloid biosynthesis; nicotine biosynthesis. In terms of biological role, NADPH-binding protein. Involved in the biosynthesis of pyridine alkaloid natural products, leading mainly to the production of anabasine, anatabine, nicotine and nornicotine, effective deterrents against herbivores with antiparasitic and pesticide properties (neurotoxins); nornicotine serves as the precursor in the synthesis of the carcinogen compound N'-nitrosonornicotine (NNN). Reductase involved in a late step of tobacco alkaloid biosynthesis. Triggers either the formation of a nicotinic acid-derived precursor or the final condensation reaction of tobacco alkaloids. The protein is Isoflavone reductase homolog A622 of Nicotiana glauca (Glaucous tobacco).